The primary structure comprises 710 residues: Adenylosuccinate synthetase (710 aa).

The segment at methionine 1–tyrosine 54 is disordered. The span at tyrosine 10–arginine 25 shows a compositional bias: polar residues. A compositionally biased stretch (basic and acidic residues) spans threonine 44 to tyrosine 54. GTP-binding positions include glycine 180–lysine 186 and glycine 210–threonine 212. The active-site Proton acceptor is aspartate 181. Mg(2+)-binding residues include aspartate 181 and glycine 210. IMP contacts are provided by residues aspartate 181 to lysine 184, asparagine 208 to histidine 211, threonine 295, lysine 309, glutamine 421, threonine 437, and lysine 567. Residue histidine 211 is the Proton donor of the active site. Alanine 563 to arginine 569 is a binding site for substrate. Residues arginine 569 and glycine 697–glycine 699 contribute to the GTP site.

The protein belongs to the adenylosuccinate synthetase family. Homodimer. Requires Mg(2+) as cofactor.

It is found in the cytoplasm. It catalyses the reaction IMP + L-aspartate + GTP = N(6)-(1,2-dicarboxyethyl)-AMP + GDP + phosphate + 2 H(+). The protein operates within purine metabolism; AMP biosynthesis via de novo pathway; AMP from IMP: step 1/2. In terms of biological role, plays an important role in the salvage pathway for purine nucleotide biosynthesis. Catalyzes the first committed step in the biosynthesis of AMP from IMP. The polypeptide is Adenylosuccinate synthetase (Leishmania major).